The following is a 92-amino-acid chain: U21-hexatoxin-Hi1a (92 aa).

A signal peptide spans 1 to 19; it reads MKTILSMLIFVALFAAIVG. Disulfide bonds link Cys41–Cys55, Cys48–Cys67, Cys54–Cys82, and Cys85–Cys92.

It belongs to the neurotoxin 21 family. As to expression, expressed by the venom gland.

The protein resides in the secreted. In terms of biological role, potent insecticidal toxin with probable ion channel impairing activity. In vivo, reversibly paralyzes all flies within 30 minutes, even at low dose (0.3 nmol/g). The protein is U21-hexatoxin-Hi1a of Hadronyche infensa (Fraser island funnel-web spider).